We begin with the raw amino-acid sequence, 219 residues long: Protein P25 (219 aa).

A Nuclear localization signal motif is present at residues 57 to 62 (KRIRFR). The tract at residues 103–146 (DPTRLDSSVNELLVSNGLVTHYDRVHNVPIHTDGFEVVDFTTVF) is transcription activation. Positions 169–178 (VYMVCLVNTV) match the Nuclear export signal motif.

Belongs to the benyvirus P25 protein family. Homooligomer.

The protein localises to the host cytoplasm. The protein resides in the host nucleus. Its function is as follows. Pathogenicity factor implicated in symptom exacerbation. Might function as transcription activator (Potential). The sequence is that of Protein P25 from Beet necrotic yellow vein virus (isolate Japan/S) (BNYVV).